We begin with the raw amino-acid sequence, 232 residues long: Orotidine 5'-phosphate decarboxylase (232 aa).

Residues D13, K35, 62 to 71, T121, R182, Q191, G211, and R212 contribute to the substrate site; that span reads DLKFHDIPNT. Residue K64 is the Proton donor of the active site.

Belongs to the OMP decarboxylase family. Type 1 subfamily. Homodimer.

It catalyses the reaction orotidine 5'-phosphate + H(+) = UMP + CO2. The protein operates within pyrimidine metabolism; UMP biosynthesis via de novo pathway; UMP from orotate: step 2/2. In terms of biological role, catalyzes the decarboxylation of orotidine 5'-monophosphate (OMP) to uridine 5'-monophosphate (UMP). The polypeptide is Orotidine 5'-phosphate decarboxylase (Acinetobacter baumannii (strain ACICU)).